Here is a 232-residue protein sequence, read N- to C-terminus: 2,3-bisphosphoglycerate-dependent phosphoglycerate mutase (232 aa).

Substrate contacts are provided by residues 10-17 (RHGESQWN), 23-24 (TG), arginine 62, 89-92 (ERHY), lysine 100, 116-117 (RR), and 186-187 (GN). Histidine 11 serves as the catalytic Tele-phosphohistidine intermediate. The active-site Proton donor/acceptor is the glutamate 89.

This sequence belongs to the phosphoglycerate mutase family. BPG-dependent PGAM subfamily. Homodimer.

The enzyme catalyses (2R)-2-phosphoglycerate = (2R)-3-phosphoglycerate. The protein operates within carbohydrate degradation; glycolysis; pyruvate from D-glyceraldehyde 3-phosphate: step 3/5. Its function is as follows. Catalyzes the interconversion of 2-phosphoglycerate and 3-phosphoglycerate. This is 2,3-bisphosphoglycerate-dependent phosphoglycerate mutase from Blochmanniella pennsylvanica (strain BPEN).